Reading from the N-terminus, the 262-residue chain is GTP cyclohydrolase 1 type 2 homolog (262 aa).

Residues histidine 68, histidine 69, aspartate 108, histidine 226, and glutamate 229 each coordinate a divalent metal cation.

The protein belongs to the GTP cyclohydrolase I type 2/NIF3 family. In terms of assembly, homohexamer.

The polypeptide is GTP cyclohydrolase 1 type 2 homolog (Ureaplasma parvum serovar 3 (strain ATCC 700970)).